The sequence spans 166 residues: Lipoprotein signal peptidase (166 aa).

3 helical membrane-spanning segments follow: residues 12-32, 70-90, and 102-122; these read WLWLVVVVLIIDLGSKYLILQ, WFFAGIAIGICVILLVMMYRS, and ALIIGGALGNLFDRLWHGFVV. Catalysis depends on residues aspartate 123 and aspartate 141. A helical transmembrane segment spans residues 137 to 157; sequence FNLADTAICIGAALIVLEGFL.

It belongs to the peptidase A8 family.

The protein resides in the cell inner membrane. The catalysed reaction is Release of signal peptides from bacterial membrane prolipoproteins. Hydrolyzes -Xaa-Yaa-Zaa-|-(S,diacylglyceryl)Cys-, in which Xaa is hydrophobic (preferably Leu), and Yaa (Ala or Ser) and Zaa (Gly or Ala) have small, neutral side chains.. Its pathway is protein modification; lipoprotein biosynthesis (signal peptide cleavage). This protein specifically catalyzes the removal of signal peptides from prolipoproteins. The polypeptide is Lipoprotein signal peptidase (Salmonella typhi).